A 129-amino-acid chain; its full sequence is uncharacterized protein (129 aa).

The helical transmembrane segment at 46–66 (FFHFFFSFLLHLISPAVTGGI) threads the bilayer.

Its subcellular location is the membrane. This is an uncharacterized protein from Saccharomyces cerevisiae (strain ATCC 204508 / S288c) (Baker's yeast).